The chain runs to 272 residues: Putative pyruvate, phosphate dikinase regulatory protein (272 aa).

154 to 161 (GVSRTSKS) lines the ADP pocket.

The protein belongs to the pyruvate, phosphate/water dikinase regulatory protein family. PDRP subfamily.

The enzyme catalyses N(tele)-phospho-L-histidyl/L-threonyl-[pyruvate, phosphate dikinase] + ADP = N(tele)-phospho-L-histidyl/O-phospho-L-threonyl-[pyruvate, phosphate dikinase] + AMP + H(+). The catalysed reaction is N(tele)-phospho-L-histidyl/O-phospho-L-threonyl-[pyruvate, phosphate dikinase] + phosphate + H(+) = N(tele)-phospho-L-histidyl/L-threonyl-[pyruvate, phosphate dikinase] + diphosphate. Bifunctional serine/threonine kinase and phosphorylase involved in the regulation of the pyruvate, phosphate dikinase (PPDK) by catalyzing its phosphorylation/dephosphorylation. The polypeptide is Putative pyruvate, phosphate dikinase regulatory protein (Wolbachia sp. subsp. Brugia malayi (strain TRS)).